The following is a 956-amino-acid chain: Protein translocase subunit SecA (956 aa).

Residues Gln-87, 105 to 109 (GEGKT), and Asp-524 each bind ATP. Zn(2+) is bound by residues Cys-940, Cys-942, Cys-951, and His-952.

Belongs to the SecA family. Monomer and homodimer. Part of the essential Sec protein translocation apparatus which comprises SecA, SecYEG and auxiliary proteins SecDF-YajC and YidC. The cofactor is Zn(2+).

It is found in the cell inner membrane. Its subcellular location is the cytoplasm. The enzyme catalyses ATP + H2O + cellular proteinSide 1 = ADP + phosphate + cellular proteinSide 2.. Functionally, part of the Sec protein translocase complex. Interacts with the SecYEG preprotein conducting channel. Has a central role in coupling the hydrolysis of ATP to the transfer of proteins into and across the cell membrane, serving both as a receptor for the preprotein-SecB complex and as an ATP-driven molecular motor driving the stepwise translocation of polypeptide chains across the membrane. This is Protein translocase subunit SecA from Beijerinckia indica subsp. indica (strain ATCC 9039 / DSM 1715 / NCIMB 8712).